The primary structure comprises 248 residues: Isoprenyl transferase (248 aa).

Asp23 is an active-site residue. A Mg(2+)-binding site is contributed by Asp23. Substrate-binding positions include 24–27 (GNGR), Trp28, Arg36, His40, and 68–70 (STE). The active-site Proton acceptor is Asn71. Residues Trp72, Arg74, Arg185, and 191–193 (RIS) contribute to the substrate site. Residue Glu204 participates in Mg(2+) binding.

Belongs to the UPP synthase family. As to quaternary structure, homodimer. Mg(2+) is required as a cofactor.

Its function is as follows. Catalyzes the condensation of isopentenyl diphosphate (IPP) with allylic pyrophosphates generating different type of terpenoids. The protein is Isoprenyl transferase of Neisseria meningitidis serogroup B (strain ATCC BAA-335 / MC58).